We begin with the raw amino-acid sequence, 508 residues long: MFS-type transporter penM (508 aa).

Positions 1 to 60 (MKDGEETPSVDGSTSASNREKLGTDLEIGPVDLSDGGKEEKVKDPNLVDWDGPDDPENPL) are disordered. Positions 35–46 (DGGKEEKVKDPN) are enriched in basic and acidic residues. N-linked (GlcNAc...) asparagine glycosylation occurs at N61. Residues 73–93 (SIALITFLTPLGSSMFAPGVG) form a helical membrane-spanning segment. A glycan (N-linked (GlcNAc...) asparagine) is linked at N100. 6 helical membrane-spanning segments follow: residues 108 to 128 (SFVV…IAPL), 143 to 163 (ILYV…SLVV), 166 to 186 (FFAG…IADM), 197 to 217 (AAWA…GAYL), 225 to 245 (WSFY…LFSI), and 299 to 319 (PIVF…YLLF). The Peroxisomal targeting signal signature appears at 293-307 (KMLFRSPIVFLLSLY). Residue N331 is glycosylated (N-linked (GlcNAc...) asparagine). 5 consecutive transmembrane segments (helical) span residues 335–355 (GAVG…LFLI), 379–399 (LPPM…YGWT), 407–427 (IVPI…FMCV), 435–457 (FTNY…GALL), and 475–495 (SLLG…WIYG).

Belongs to the major facilitator superfamily.

The protein localises to the peroxisome membrane. Functionally, MFS-type transporter involved in penicillin production, most likely through the translocation of isopenicillin N from the cytosol to the peroxisomal lumen across the peroxisomal membrane. The polypeptide is MFS-type transporter penM (Penicillium rubens (strain ATCC 28089 / DSM 1075 / NRRL 1951 / Wisconsin 54-1255) (Penicillium chrysogenum)).